The primary structure comprises 1935 residues: Myosin-7 (1935 aa).

The region spanning 32–81 (DLKKDVFVPDDKEEFVKATILSREGGKVTAETEHGKTVTVKEDQVLQQNP) is the Myosin N-terminal SH3-like domain. The region spanning 85-778 (DKIEDMAMLT…LLGLLEEMRD (694 aa)) is the Myosin motor domain. K129 bears the N6,N6,N6-trimethyllysine mark. An ATP-binding site is contributed by 178-185 (GESGAGKT). Phosphothreonine is present on T378. Actin-binding regions lie at residues 655–677 (LNKL…IPNE) and 757–771 (KFGH…GLLG). Residues 781 to 810 (LSRIITRIQAQSRGVLSRMEFKKLLERRDS) enclose the IQ domain. The stretch at 839–1935 (LLKSAETEKE…DIGTKGLNEE (1097 aa)) forms a coiled coil. Phosphoserine is present on residues S1137 and S1269. T1282 bears the Phosphothreonine mark. Position 1308 is a phosphotyrosine (Y1308). T1309 is subject to Phosphothreonine. S1510 bears the Phosphoserine mark. T1513 carries the post-translational modification Phosphothreonine. The tract at residues 1907–1935 (EERADIAESQVNKLRAKSRDIGTKGLNEE) is disordered. The span at 1923-1935 (KSRDIGTKGLNEE) shows a compositional bias: basic and acidic residues.

It belongs to the TRAFAC class myosin-kinesin ATPase superfamily. Myosin family. In terms of assembly, muscle myosin is a hexameric protein that consists of 2 heavy chain subunits (MHC), 2 alkali light chain subunits (MLC) and 2 regulatory light chain subunits (MLC-2). Interacts with ECPAS. Interacts (via C-terminus) with LRRC39.

The protein localises to the cytoplasm. The protein resides in the myofibril. Its subcellular location is the sarcomere. Functionally, myosins are actin-based motor molecules with ATPase activity essential for muscle contraction. Forms regular bipolar thick filaments that, together with actin thin filaments, constitute the fundamental contractile unit of skeletal and cardiac muscle. This is Myosin-7 (MYH7) from Bos taurus (Bovine).